A 218-amino-acid polypeptide reads, in one-letter code: uncharacterized protein (218 aa).

In terms of domain architecture, ABC transporter spans 2–216; it reads IEVLNLTKKI…ETSEKVIYKK (215 aa). 34–41 provides a ligand contact to ATP; that stretch reads GSNGSGKT.

The protein belongs to the ABC transporter superfamily.

This is an uncharacterized protein from Bacillus subtilis (strain 168).